The primary structure comprises 337 residues: Phenylalanine--tRNA ligase alpha subunit (337 aa).

Glu-252 serves as a coordination point for Mg(2+).

This sequence belongs to the class-II aminoacyl-tRNA synthetase family. Phe-tRNA synthetase alpha subunit type 1 subfamily. Tetramer of two alpha and two beta subunits. Mg(2+) serves as cofactor.

The protein localises to the cytoplasm. It carries out the reaction tRNA(Phe) + L-phenylalanine + ATP = L-phenylalanyl-tRNA(Phe) + AMP + diphosphate + H(+). This chain is Phenylalanine--tRNA ligase alpha subunit, found in Francisella tularensis subsp. tularensis (strain SCHU S4 / Schu 4).